A 481-amino-acid chain; its full sequence is Proline--tRNA ligase (481 aa).

Belongs to the class-II aminoacyl-tRNA synthetase family. ProS type 3 subfamily. As to quaternary structure, homodimer.

The protein localises to the cytoplasm. The catalysed reaction is tRNA(Pro) + L-proline + ATP = L-prolyl-tRNA(Pro) + AMP + diphosphate. Catalyzes the attachment of proline to tRNA(Pro) in a two-step reaction: proline is first activated by ATP to form Pro-AMP and then transferred to the acceptor end of tRNA(Pro). The sequence is that of Proline--tRNA ligase from Chlorobium chlorochromatii (strain CaD3).